We begin with the raw amino-acid sequence, 109 residues long: Small ribosomal subunit protein uS10 (109 aa).

Belongs to the universal ribosomal protein uS10 family. Part of the 30S ribosomal subunit.

Involved in the binding of tRNA to the ribosomes. The chain is Small ribosomal subunit protein uS10 from Nanoarchaeum equitans (strain Kin4-M).